The following is a 383-amino-acid chain: Histidine decarboxylase (383 aa).

H120 is a substrate binding site. K233 carries the post-translational modification N6-(pyridoxal phosphate)lysine.

The protein belongs to the group II decarboxylase family. Homotetramer. Pyridoxal 5'-phosphate is required as a cofactor.

It catalyses the reaction L-histidine + H(+) = histamine + CO2. This Acinetobacter baumannii (strain ATCC 17978 / DSM 105126 / CIP 53.77 / LMG 1025 / NCDC KC755 / 5377) protein is Histidine decarboxylase.